The chain runs to 702 residues: Ribosomal RNA large subunit methyltransferase K/L (702 aa).

Residues 43–154 form the THUMP domain; that stretch reads LVYQSLMWSR…KETASIALDL (112 aa).

The protein belongs to the methyltransferase superfamily. RlmKL family.

The protein localises to the cytoplasm. The enzyme catalyses guanosine(2445) in 23S rRNA + S-adenosyl-L-methionine = N(2)-methylguanosine(2445) in 23S rRNA + S-adenosyl-L-homocysteine + H(+). It carries out the reaction guanosine(2069) in 23S rRNA + S-adenosyl-L-methionine = N(2)-methylguanosine(2069) in 23S rRNA + S-adenosyl-L-homocysteine + H(+). Its function is as follows. Specifically methylates the guanine in position 2445 (m2G2445) and the guanine in position 2069 (m7G2069) of 23S rRNA. This is Ribosomal RNA large subunit methyltransferase K/L from Shigella dysenteriae serotype 1 (strain Sd197).